The following is a 397-amino-acid chain: Enoyl-[acyl-carrier-protein] reductase [NADH] (397 aa).

NAD(+) contacts are provided by residues 48 to 53, 74 to 75, 111 to 112, and 139 to 140; these read GASTGY, FE, DA, and VA. Residue Y225 participates in substrate binding. Catalysis depends on Y235, which acts as the Proton donor. Residues K244 and 273 to 275 each bind NAD(+); that span reads VVT.

Belongs to the TER reductase family. Monomer.

The enzyme catalyses a 2,3-saturated acyl-[ACP] + NAD(+) = a (2E)-enoyl-[ACP] + NADH + H(+). It participates in lipid metabolism; fatty acid biosynthesis. In terms of biological role, involved in the final reduction of the elongation cycle of fatty acid synthesis (FAS II). Catalyzes the reduction of a carbon-carbon double bond in an enoyl moiety that is covalently linked to an acyl carrier protein (ACP). This Burkholderia pseudomallei (strain K96243) protein is Enoyl-[acyl-carrier-protein] reductase [NADH].